Consider the following 188-residue polypeptide: Ribosome-recycling factor (188 aa).

It belongs to the RRF family.

Its subcellular location is the cytoplasm. Its function is as follows. Responsible for the release of ribosomes from messenger RNA at the termination of protein biosynthesis. May increase the efficiency of translation by recycling ribosomes from one round of translation to another. This is Ribosome-recycling factor from Granulibacter bethesdensis (strain ATCC BAA-1260 / CGDNIH1).